Reading from the N-terminus, the 275-residue chain is Large ribosomal subunit protein uL2 (275 aa).

A disordered region spans residues 227–261; sequence PVDHPHGGGEAKSGQGNPHPVTPWGVPTKGYKTRK.

The protein belongs to the universal ribosomal protein uL2 family. As to quaternary structure, part of the 50S ribosomal subunit. Forms a bridge to the 30S subunit in the 70S ribosome.

Its function is as follows. One of the primary rRNA binding proteins. Required for association of the 30S and 50S subunits to form the 70S ribosome, for tRNA binding and peptide bond formation. It has been suggested to have peptidyltransferase activity; this is somewhat controversial. Makes several contacts with the 16S rRNA in the 70S ribosome. The sequence is that of Large ribosomal subunit protein uL2 from Xylella fastidiosa (strain M23).